Consider the following 603-residue polypeptide: Elongation factor 4 (603 aa).

One can recognise a tr-type G domain in the interval 2-184; the sequence is NHIRNFSIIA…AVVARMPPPR (183 aa). GTP-binding positions include 14–19 and 131–134; these read DHGKST and NKMD.

The protein belongs to the TRAFAC class translation factor GTPase superfamily. Classic translation factor GTPase family. LepA subfamily.

It localises to the cell inner membrane. The enzyme catalyses GTP + H2O = GDP + phosphate + H(+). Required for accurate and efficient protein synthesis under certain stress conditions. May act as a fidelity factor of the translation reaction, by catalyzing a one-codon backward translocation of tRNAs on improperly translocated ribosomes. Back-translocation proceeds from a post-translocation (POST) complex to a pre-translocation (PRE) complex, thus giving elongation factor G a second chance to translocate the tRNAs correctly. Binds to ribosomes in a GTP-dependent manner. The sequence is that of Elongation factor 4 from Albidiferax ferrireducens (strain ATCC BAA-621 / DSM 15236 / T118) (Rhodoferax ferrireducens).